The sequence spans 80 residues: uncharacterized protein (80 aa).

The protein belongs to the BolA/IbaG family.

This is an uncharacterized protein from Buchnera aphidicola subsp. Acyrthosiphon pisum (strain APS) (Acyrthosiphon pisum symbiotic bacterium).